We begin with the raw amino-acid sequence, 1185 residues long: Mucin-6 (1185 aa).

2 disulfide bridges follow: Cys1–Cys132 and Cys23–Cys168. A VWFD 1 domain is found at 1-169; the sequence is CSTWGGGHFS…KMDDPSEICL (169 aa). N-linked (GlcNAc...) (complex) asparagine glycosylation is present at Asn223. One can recognise a TIL 1 domain in the interval 257–312; the sequence is CSANQIYEECGSPCIKTCSNPEYSCSSHCTYGCFCPEGTVLDDISKNRTCVHLEQC. The region spanning 350–534 is the VWFD 2 domain; sequence GRCSLEGGSF…AMERETDPCA (185 aa). 2 disulfides stabilise this stretch: Cys352–Cys488 and Cys374–Cys533. 2 TIL domains span residues 619–676 and 737–782; these read CTGN…KSHC and GATC…PEEC. The region spanning 821–993 is the VWFD 3 domain; the sequence is STCNLYGEGH…NSWKENPLCG (173 aa). Intrachain disulfides connect Cys823/Cys957, Cys845/Cys992, Cys854/Cys954, and Cys872/Cys879. Asn930 is a glycosylation site (N-linked (GlcNAc...) (complex) asparagine). Residues 1160–1178 are compositionally biased toward low complexity; the sequence is PTATQPTSPSTSSASTVLT. Residues 1160–1185 are disordered; the sequence is PTATQPTSPSTSSASTVLTETTNPPV.

In terms of assembly, multimer; disulfide-linked. In terms of processing, N-glycosylated with N-acetylglucosamine (6.7%), N-acetylgalactosamine (0.6%), galactose (1.8%), mannose (4.6%), N-acetylneuraminic acid (1.0%) and sulfate-containing glycans (0.7%).

The protein resides in the secreted. Its function is as follows. Ovomucin, the glycoprotein responsible for the gel properties of egg white, is composed for 2 subunits, alpha-ovomucin/MUC5B and beta-ovomucin/MUC6. This Gallus gallus (Chicken) protein is Mucin-6 (MUC6).